We begin with the raw amino-acid sequence, 184 residues long: uncharacterized protein (184 aa).

The region spanning 72–135 (RKSQAILLIG…GIALGSAVKV (64 aa)) is the 4Fe-4S domain. Residues Cys-92, Cys-95, Cys-100, and Cys-118 each contribute to the [4Fe-4S] cluster site.

It depends on [4Fe-4S] cluster as a cofactor.

This is an uncharacterized protein from Archaeoglobus fulgidus (strain ATCC 49558 / DSM 4304 / JCM 9628 / NBRC 100126 / VC-16).